We begin with the raw amino-acid sequence, 174 residues long: tRNA (cytidine(56)-2'-O)-methyltransferase (174 aa).

S-adenosyl-L-methionine-binding positions include Leu-83, 108-112 (GAEKV), and 126-133 (VGNQPHSE).

This sequence belongs to the aTrm56 family. As to quaternary structure, homodimer.

The protein localises to the cytoplasm. It catalyses the reaction cytidine(56) in tRNA + S-adenosyl-L-methionine = 2'-O-methylcytidine(56) in tRNA + S-adenosyl-L-homocysteine + H(+). In terms of biological role, specifically catalyzes the AdoMet-dependent 2'-O-ribose methylation of cytidine at position 56 in tRNAs. This chain is tRNA (cytidine(56)-2'-O)-methyltransferase, found in Methanothrix thermoacetophila (strain DSM 6194 / JCM 14653 / NBRC 101360 / PT) (Methanosaeta thermophila).